The primary structure comprises 315 residues: MLEIEKPKIECVERTDDNSYAKFVVEPLERGYGITLGNSLRRILLSSLPGTAVTSVKIEGVLHEFSTVPGVLEDVTDIILNLKSLALKGHTDEPKVLRLEAEGEGVIKAGDIITDADIEILNPDLKIATLDKDGRLFMEMTAERGRGYVSADKNKKPDQAIGIIPIDSIFAPIYKVNYTVEDTRVGMVTDYDKLTLEVWSNGSITPEEATSLAAKILSEHLRLFIGLTDKLNNVEIMVEKEEEAKDKILEMTIEDLDLSVRSYNCLKRAGINSVEELTQKTEEDMIKVRNLGRKSLEEVESKLKELGLGFRKADD.

The alpha N-terminal domain (alpha-NTD) stretch occupies residues 1–228; the sequence is MLEIEKPKIE…EHLRLFIGLT (228 aa). The tract at residues 245-315 is alpha C-terminal domain (alpha-CTD); it reads KDKILEMTIE…LGLGFRKADD (71 aa).

This sequence belongs to the RNA polymerase alpha chain family. In terms of assembly, homodimer. The RNAP catalytic core consists of 2 alpha, 1 beta, 1 beta' and 1 omega subunit. When a sigma factor is associated with the core the holoenzyme is formed, which can initiate transcription.

The enzyme catalyses RNA(n) + a ribonucleoside 5'-triphosphate = RNA(n+1) + diphosphate. DNA-dependent RNA polymerase catalyzes the transcription of DNA into RNA using the four ribonucleoside triphosphates as substrates. The polypeptide is DNA-directed RNA polymerase subunit alpha (Desulfitobacterium hafniense (strain DSM 10664 / DCB-2)).